We begin with the raw amino-acid sequence, 396 residues long: Putative carbamoyltransferase YgeW (396 aa).

Carbamoyl phosphate-binding positions include 71 to 74 (STRT), Gln98, 165 to 168 (HPTQ), and 330 to 331 (CL).

This sequence belongs to the aspartate/ornithine carbamoyltransferase superfamily. As to quaternary structure, homotrimer.

This is Putative carbamoyltransferase YgeW (ygeW) from Escherichia coli O6:H1 (strain CFT073 / ATCC 700928 / UPEC).